A 207-amino-acid polypeptide reads, in one-letter code: Ribosomal RNA small subunit methyltransferase G (207 aa).

S-adenosyl-L-methionine-binding positions include G77, F82, 100–102 (ERS), and R141.

The protein belongs to the methyltransferase superfamily. RNA methyltransferase RsmG family.

Its subcellular location is the cytoplasm. In terms of biological role, specifically methylates the N7 position of a guanine in 16S rRNA. The chain is Ribosomal RNA small subunit methyltransferase G from Borrelia hermsii (strain HS1 / DAH).